A 320-amino-acid chain; its full sequence is Ferrochelatase (320 aa).

Positions 194 and 275 each coordinate Fe cation.

This sequence belongs to the ferrochelatase family. Monomer.

It is found in the cytoplasm. It carries out the reaction heme b + 2 H(+) = protoporphyrin IX + Fe(2+). It participates in porphyrin-containing compound metabolism; protoheme biosynthesis; protoheme from protoporphyrin-IX: step 1/1. Catalyzes the ferrous insertion into protoporphyrin IX. The sequence is that of Ferrochelatase from Salmonella arizonae (strain ATCC BAA-731 / CDC346-86 / RSK2980).